A 64-amino-acid chain; its full sequence is Large ribosomal subunit protein bL35 (64 aa).

It belongs to the bacterial ribosomal protein bL35 family.

This is Large ribosomal subunit protein bL35 from Chlorobium chlorochromatii (strain CaD3).